We begin with the raw amino-acid sequence, 377 residues long: GTP 3',8-cyclase (377 aa).

A disordered region spans residues 1 to 29 (MTTRLYLSPTPPRNDREGASKSTSASIKH). The region spanning 45-271 (RFGRIARDLR…FTLSPAKEPR (227 aa)) is the Radical SAM core domain. Position 54 (arginine 54) interacts with GTP. Residues cysteine 61 and cysteine 65 each coordinate [4Fe-4S] cluster. Tyrosine 67 lines the S-adenosyl-L-methionine pocket. A [4Fe-4S] cluster-binding site is contributed by cysteine 68. Arginine 105 provides a ligand contact to GTP. Glycine 109 serves as a coordination point for S-adenosyl-L-methionine. Position 140 (threonine 140) interacts with GTP. Serine 164 lines the S-adenosyl-L-methionine pocket. A GTP-binding site is contributed by lysine 201. Residue methionine 235 coordinates S-adenosyl-L-methionine. [4Fe-4S] cluster is bound by residues cysteine 304 and cysteine 307. 309–311 (RSR) is a binding site for GTP. Residue cysteine 321 coordinates [4Fe-4S] cluster.

The protein belongs to the radical SAM superfamily. MoaA family. Monomer and homodimer. It depends on [4Fe-4S] cluster as a cofactor.

It catalyses the reaction GTP + AH2 + S-adenosyl-L-methionine = (8S)-3',8-cyclo-7,8-dihydroguanosine 5'-triphosphate + 5'-deoxyadenosine + L-methionine + A + H(+). Its pathway is cofactor biosynthesis; molybdopterin biosynthesis. Catalyzes the cyclization of GTP to (8S)-3',8-cyclo-7,8-dihydroguanosine 5'-triphosphate. This Corynebacterium glutamicum (strain ATCC 13032 / DSM 20300 / JCM 1318 / BCRC 11384 / CCUG 27702 / LMG 3730 / NBRC 12168 / NCIMB 10025 / NRRL B-2784 / 534) protein is GTP 3',8-cyclase.